The following is a 105-amino-acid chain: Large ribosomal subunit protein uL24 (105 aa).

This sequence belongs to the universal ribosomal protein uL24 family. Part of the 50S ribosomal subunit.

In terms of biological role, one of two assembly initiator proteins, it binds directly to the 5'-end of the 23S rRNA, where it nucleates assembly of the 50S subunit. One of the proteins that surrounds the polypeptide exit tunnel on the outside of the subunit. This Rhizorhabdus wittichii (strain DSM 6014 / CCUG 31198 / JCM 15750 / NBRC 105917 / EY 4224 / RW1) (Sphingomonas wittichii) protein is Large ribosomal subunit protein uL24.